The chain runs to 35 residues: Bacteriocin SRCAM 1580 (35 aa).

This sequence belongs to the bacteriocin class IIA/YGNGV family.

Its subcellular location is the secreted. Bacteriocin with antibacterial activity against C.jejuni. The chain is Bacteriocin SRCAM 1580 from Niallia circulans (Bacillus circulans).